A 549-amino-acid chain; its full sequence is CTP synthase (549 aa).

An amidoligase domain region spans residues 1-270; that stretch reads MTKFVFVTGG…DRLICEELRL (270 aa). Ser13 lines the CTP pocket. Residue Ser13 participates in UTP binding. ATP-binding positions include 14 to 19 and Asp71; that span reads SLGKGI. Asp71 and Glu144 together coordinate Mg(2+). CTP contacts are provided by residues 151–153, 191–196, and Lys227; these read DIE and KTKPTQ. UTP contacts are provided by residues 191–196 and Lys227; that span reads KTKPTQ. The Glutamine amidotransferase type-1 domain maps to 295–547; sequence TIGMVGKYVD…VEAALAAQRQ (253 aa). An L-glutamine-binding site is contributed by Gly356. Cys383 functions as the Nucleophile; for glutamine hydrolysis in the catalytic mechanism. Residues 384–387, Glu407, and Arg473 each bind L-glutamine; that span reads LGMQ. Catalysis depends on residues His520 and Glu522.

This sequence belongs to the CTP synthase family. Homotetramer.

It catalyses the reaction UTP + L-glutamine + ATP + H2O = CTP + L-glutamate + ADP + phosphate + 2 H(+). The catalysed reaction is L-glutamine + H2O = L-glutamate + NH4(+). It carries out the reaction UTP + NH4(+) + ATP = CTP + ADP + phosphate + 2 H(+). It functions in the pathway pyrimidine metabolism; CTP biosynthesis via de novo pathway; CTP from UDP: step 2/2. Its activity is regulated as follows. Allosterically activated by GTP, when glutamine is the substrate; GTP has no effect on the reaction when ammonia is the substrate. The allosteric effector GTP functions by stabilizing the protein conformation that binds the tetrahedral intermediate(s) formed during glutamine hydrolysis. Inhibited by the product CTP, via allosteric rather than competitive inhibition. Its function is as follows. Catalyzes the ATP-dependent amination of UTP to CTP with either L-glutamine or ammonia as the source of nitrogen. Regulates intracellular CTP levels through interactions with the four ribonucleotide triphosphates. The chain is CTP synthase from Cupriavidus metallidurans (strain ATCC 43123 / DSM 2839 / NBRC 102507 / CH34) (Ralstonia metallidurans).